The sequence spans 122 residues: Large ribosomal subunit protein uL14 (122 aa).

This sequence belongs to the universal ribosomal protein uL14 family. Part of the 50S ribosomal subunit. Forms a cluster with proteins L3 and L19. In the 70S ribosome, L14 and L19 interact and together make contacts with the 16S rRNA in bridges B5 and B8.

Binds to 23S rRNA. Forms part of two intersubunit bridges in the 70S ribosome. The polypeptide is Large ribosomal subunit protein uL14 (Psychrobacter sp. (strain PRwf-1)).